Here is a 274-residue protein sequence, read N- to C-terminus: 4-hydroxy-tetrahydrodipicolinate reductase (274 aa).

NAD(+) is bound by residues 11 to 16 and E37; that span reads GGSGRM. NADP(+) is bound at residue R38. NAD(+) is bound by residues 101–103 and 125–128; these read GTT and APNM. The active-site Proton donor/acceptor is the H158. H159 is a (S)-2,3,4,5-tetrahydrodipicolinate binding site. Catalysis depends on K162, which acts as the Proton donor. 168–169 contributes to the (S)-2,3,4,5-tetrahydrodipicolinate binding site; sequence GT.

It belongs to the DapB family.

It is found in the cytoplasm. The catalysed reaction is (S)-2,3,4,5-tetrahydrodipicolinate + NAD(+) + H2O = (2S,4S)-4-hydroxy-2,3,4,5-tetrahydrodipicolinate + NADH + H(+). It catalyses the reaction (S)-2,3,4,5-tetrahydrodipicolinate + NADP(+) + H2O = (2S,4S)-4-hydroxy-2,3,4,5-tetrahydrodipicolinate + NADPH + H(+). It functions in the pathway amino-acid biosynthesis; L-lysine biosynthesis via DAP pathway; (S)-tetrahydrodipicolinate from L-aspartate: step 4/4. Catalyzes the conversion of 4-hydroxy-tetrahydrodipicolinate (HTPA) to tetrahydrodipicolinate. The chain is 4-hydroxy-tetrahydrodipicolinate reductase from Shewanella pealeana (strain ATCC 700345 / ANG-SQ1).